A 179-amino-acid chain; its full sequence is ATP synthase subunit delta (179 aa).

Belongs to the ATPase delta chain family. In terms of assembly, F-type ATPases have 2 components, F(1) - the catalytic core - and F(0) - the membrane proton channel. F(1) has five subunits: alpha(3), beta(3), gamma(1), delta(1), epsilon(1). F(0) has three main subunits: a(1), b(2) and c(10-14). The alpha and beta chains form an alternating ring which encloses part of the gamma chain. F(1) is attached to F(0) by a central stalk formed by the gamma and epsilon chains, while a peripheral stalk is formed by the delta and b chains.

The protein resides in the cell inner membrane. Its function is as follows. F(1)F(0) ATP synthase produces ATP from ADP in the presence of a proton or sodium gradient. F-type ATPases consist of two structural domains, F(1) containing the extramembraneous catalytic core and F(0) containing the membrane proton channel, linked together by a central stalk and a peripheral stalk. During catalysis, ATP synthesis in the catalytic domain of F(1) is coupled via a rotary mechanism of the central stalk subunits to proton translocation. This protein is part of the stalk that links CF(0) to CF(1). It either transmits conformational changes from CF(0) to CF(1) or is implicated in proton conduction. In Anaeromyxobacter dehalogenans (strain 2CP-1 / ATCC BAA-258), this protein is ATP synthase subunit delta.